A 92-amino-acid polypeptide reads, in one-letter code: Large ribosomal subunit protein bL31 (92 aa).

This sequence belongs to the bacterial ribosomal protein bL31 family. Type A subfamily. As to quaternary structure, part of the 50S ribosomal subunit.

Functionally, binds the 23S rRNA. In Mesoplasma florum (strain ATCC 33453 / NBRC 100688 / NCTC 11704 / L1) (Acholeplasma florum), this protein is Large ribosomal subunit protein bL31.